A 352-amino-acid chain; its full sequence is Ketol-acid reductoisomerase (NAD(+)) (352 aa).

The region spanning 11–199 is the KARI N-terminal Rossmann domain; sequence ENVVTSEEFT…AIGSGYLFPT (189 aa). NAD(+) is bound by residues 38 to 41 and 100 to 103; these read YGVQ and DAGQ. His124 is an active-site residue. Gly153 contacts NAD(+). The KARI C-terminal knotted domain maps to 200–347; it reads TFEKEVFSDL…AAVRALRPEN (148 aa). Residues Asp208, Glu212, Glu244, and Glu248 each contribute to the Mg(2+) site. Ser270 provides a ligand contact to substrate.

This sequence belongs to the ketol-acid reductoisomerase family. The cofactor is Mg(2+).

It catalyses the reaction (2R)-2,3-dihydroxy-3-methylbutanoate + NAD(+) = (2S)-2-acetolactate + NADH + H(+). The protein operates within amino-acid biosynthesis; L-isoleucine biosynthesis; L-isoleucine from 2-oxobutanoate: step 2/4. Its pathway is amino-acid biosynthesis; L-valine biosynthesis; L-valine from pyruvate: step 2/4. Functionally, involved in the biosynthesis of branched-chain amino acids (BCAA). Catalyzes an alkyl-migration followed by a ketol-acid reduction of (S)-2-acetolactate (S2AL) to yield (R)-2,3-dihydroxy-isovalerate. In the isomerase reaction, S2AL is rearranged via a Mg-dependent methyl migration to produce 3-hydroxy-3-methyl-2-ketobutyrate (HMKB). In the reductase reaction, this 2-ketoacid undergoes a metal-dependent reduction by NADH to yield (R)-2,3-dihydroxy-isovalerate. This is Ketol-acid reductoisomerase (NAD(+)) from Desulfosudis oleivorans (strain DSM 6200 / JCM 39069 / Hxd3) (Desulfococcus oleovorans).